The following is a 262-amino-acid chain: Phenylalanine-4-hydroxylase (262 aa).

Histidine 121, histidine 126, and glutamate 166 together coordinate Fe cation.

Belongs to the biopterin-dependent aromatic amino acid hydroxylase family. Monomer. Fe(2+) serves as cofactor.

The catalysed reaction is (6R)-L-erythro-5,6,7,8-tetrahydrobiopterin + L-phenylalanine + O2 = (4aS,6R)-4a-hydroxy-L-erythro-5,6,7,8-tetrahydrobiopterin + L-tyrosine. It functions in the pathway amino-acid degradation; L-phenylalanine degradation; acetoacetate and fumarate from L-phenylalanine: step 1/6. This is Phenylalanine-4-hydroxylase (phhA) from Pseudomonas aeruginosa (strain ATCC 15692 / DSM 22644 / CIP 104116 / JCM 14847 / LMG 12228 / 1C / PRS 101 / PAO1).